The chain runs to 134 residues: Replication enhancer protein (134 aa).

It belongs to the geminiviridae replication enhancer protein family. In terms of assembly, homooligomer. Interacts with the replication-associated protein (REP). Interacts with host proliferating cell nuclear antigen (PCNA). Interacts with host retinoblastoma-related protein 1 (RBR1), and may thereby deregulate the host cell cycle. Oligomerization and interaction with PCNA are necessary for optimal replication enhancement.

Its function is as follows. Increases viral DNA accumulation. Enhances infectivity and symptom expression. The chain is Replication enhancer protein from Squash leaf curl virus (SLCV).